The chain runs to 525 residues: Tigger transposable element-derived protein 2 (525 aa).

An HTH psq-type domain is found at 1-52 (MLGKRKRVVLTIKDKLDIIKKLEEGISFKKLSVVYGIGESTVRDIKKNKERI). 2 consecutive DNA-binding regions (H-T-H motif) follow at residues 28–48 (FKKLSVVYGIGESTVRDIKKN) and 100–132 (TICAKQAKFFFDALGMEGDFNASSGWLTRFKQR). Residues 67-139 (KRKSMKSSTY…KQRHGIPKAA (73 aa)) form the HTH CENPB-type domain. One can recognise a DDE-1 domain in the interval 168 to 385 (LQPEQIYGAD…VKSSTITKAW (218 aa)). Residues 442–474 (QVLTDSESAEDQTKAAEQKPSSKSRKTELNPEK) form a disordered region.

The protein belongs to the tigger transposable element derived protein family.

Its subcellular location is the nucleus. The chain is Tigger transposable element-derived protein 2 (TIGD2) from Homo sapiens (Human).